Here is an 89-residue protein sequence, read N- to C-terminus: Large ribosomal subunit protein bL31B (89 aa).

It belongs to the bacterial ribosomal protein bL31 family. Type B subfamily. Part of the 50S ribosomal subunit.

This is Large ribosomal subunit protein bL31B from Aeromonas hydrophila subsp. hydrophila (strain ATCC 7966 / DSM 30187 / BCRC 13018 / CCUG 14551 / JCM 1027 / KCTC 2358 / NCIMB 9240 / NCTC 8049).